The chain runs to 398 residues: T-box transcription factor TBX1 (398 aa).

Residues 23 to 72 are disordered; it reads AAGGFPGAASPGADPYGPREPPPPPPRYDPCAAAAPGAPGPPPPPHAYPF. Low complexity predominate over residues 29-38; sequence GAASPGADPY. Pro residues-rich tracts occupy residues 40–50 and 60–69; these read PREPPPPPPRY and APGPPPPPHA. Residues 119 to 297 constitute a DNA-binding region (T-box); sequence LWDEFNQLGT…SNPFAKGFRD (179 aa).

Binds DNA as a dimer. Interacts with DSCR6. Interacts with NKX2-5.

The protein localises to the nucleus. Functionally, transcription factor that plays a key role in cardiovascular development by promoting pharyngeal arch segmentation during embryonic development. Also involved in craniofacial muscle development. Together with NKX2-5, acts as a regulator of asymmetric cardiac morphogenesis by promoting expression of PITX2. Acts upstream of TBX1 for the formation of the thymus and parathyroid glands from the third pharyngeal pouch. Required for hair follicle stem cell self-renewal. Binds to the palindromic T site 5'-TTCACACCTAGGTGTGAA-3' DNA sequence. This is T-box transcription factor TBX1 from Homo sapiens (Human).